Reading from the N-terminus, the 201-residue chain is Cardiotrophin-1 (201 aa).

Belongs to the IL-6 superfamily. Highly expressed in heart, skeletal muscle, prostate and ovary. Lower levels in lung, kidney, pancreas, thymus, testis and small intestine. Little or no expression in brain, placenta, liver, spleen, colon or peripheral blood leukocytes.

Its subcellular location is the secreted. In terms of biological role, induces cardiac myocyte hypertrophy in vitro. Binds to and activates the ILST/gp130 receptor. The chain is Cardiotrophin-1 (CTF1) from Homo sapiens (Human).